Here is a 337-residue protein sequence, read N- to C-terminus: Alcohol dehydrogenase 1 (337 aa).

Residues cysteine 37, histidine 58, cysteine 89, cysteine 92, cysteine 95, cysteine 103, and cysteine 145 each contribute to the Zn(2+) site.

The protein belongs to the zinc-containing alcohol dehydrogenase family. Multimeric (with different ratios of monomers). It depends on Zn(2+) as a cofactor.

The catalysed reaction is a primary alcohol + NAD(+) = an aldehyde + NADH + H(+). It catalyses the reaction a secondary alcohol + NAD(+) = a ketone + NADH + H(+). It functions in the pathway alcohol metabolism; ethanol biosynthesis via fermentation pathway. With respect to regulation, inhibited by ethanol. This chain is Alcohol dehydrogenase 1 (adhA), found in Zymomonas mobilis subsp. mobilis (strain ATCC 31821 / ZM4 / CP4).